The sequence spans 248 residues: Aspartate/glutamate leucyltransferase (248 aa).

This sequence belongs to the R-transferase family. Bpt subfamily.

The protein resides in the cytoplasm. It catalyses the reaction N-terminal L-glutamyl-[protein] + L-leucyl-tRNA(Leu) = N-terminal L-leucyl-L-glutamyl-[protein] + tRNA(Leu) + H(+). The catalysed reaction is N-terminal L-aspartyl-[protein] + L-leucyl-tRNA(Leu) = N-terminal L-leucyl-L-aspartyl-[protein] + tRNA(Leu) + H(+). In terms of biological role, functions in the N-end rule pathway of protein degradation where it conjugates Leu from its aminoacyl-tRNA to the N-termini of proteins containing an N-terminal aspartate or glutamate. This chain is Aspartate/glutamate leucyltransferase, found in Methylobacterium nodulans (strain LMG 21967 / CNCM I-2342 / ORS 2060).